A 252-amino-acid polypeptide reads, in one-letter code: Phosphoglycolate phosphatase (252 aa).

The Nucleophile role is filled by Asp13. Mg(2+) is bound by residues Asp13, Asp15, and Asp192.

Belongs to the HAD-like hydrolase superfamily. CbbY/CbbZ/Gph/YieH family. As to quaternary structure, monomer. Mg(2+) is required as a cofactor. The cofactor is chloride.

The catalysed reaction is 2-phosphoglycolate + H2O = glycolate + phosphate. The protein operates within organic acid metabolism; glycolate biosynthesis; glycolate from 2-phosphoglycolate: step 1/1. Functionally, specifically catalyzes the dephosphorylation of 2-phosphoglycolate. Is involved in the dissimilation of the intracellular 2-phosphoglycolate formed during the DNA repair of 3'-phosphoglycolate ends, a major class of DNA lesions induced by oxidative stress. This is Phosphoglycolate phosphatase from Salmonella typhimurium (strain LT2 / SGSC1412 / ATCC 700720).